The chain runs to 251 residues: Phosphoribosylaminoimidazole-succinocarboxamide synthase (251 aa).

It belongs to the SAICAR synthetase family.

The enzyme catalyses 5-amino-1-(5-phospho-D-ribosyl)imidazole-4-carboxylate + L-aspartate + ATP = (2S)-2-[5-amino-1-(5-phospho-beta-D-ribosyl)imidazole-4-carboxamido]succinate + ADP + phosphate + 2 H(+). The protein operates within purine metabolism; IMP biosynthesis via de novo pathway; 5-amino-1-(5-phospho-D-ribosyl)imidazole-4-carboxamide from 5-amino-1-(5-phospho-D-ribosyl)imidazole-4-carboxylate: step 1/2. The protein is Phosphoribosylaminoimidazole-succinocarboxamide synthase of Phenylobacterium zucineum (strain HLK1).